We begin with the raw amino-acid sequence, 369 residues long: 3-dehydroquinate synthase (369 aa).

Residues 75 to 80 (DGEEHK), 109 to 113 (GVIGD), 133 to 134 (TT), Lys146, Lys155, and 173 to 176 (TLKT) each bind NAD(+). Residues Glu188, His251, and His268 each coordinate Zn(2+).

The protein belongs to the sugar phosphate cyclases superfamily. Dehydroquinate synthase family. Co(2+) serves as cofactor. Requires Zn(2+) as cofactor. NAD(+) is required as a cofactor.

It is found in the cytoplasm. It carries out the reaction 7-phospho-2-dehydro-3-deoxy-D-arabino-heptonate = 3-dehydroquinate + phosphate. The protein operates within metabolic intermediate biosynthesis; chorismate biosynthesis; chorismate from D-erythrose 4-phosphate and phosphoenolpyruvate: step 2/7. Catalyzes the conversion of 3-deoxy-D-arabino-heptulosonate 7-phosphate (DAHP) to dehydroquinate (DHQ). The protein is 3-dehydroquinate synthase of Legionella pneumophila (strain Corby).